Here is a 66-residue protein sequence, read N- to C-terminus: Cold shock-like protein CspD (66 aa).

The CSD domain maps to 4 to 63; that stretch reads GKVKWFNGEKGFGFIEVEGGEDVFVHFSAIQGDGFKTLEEGQEVSFEIVDGNRGPQAANV.

Homodimer.

It localises to the cytoplasm. The polypeptide is Cold shock-like protein CspD (cspD) (Bacillus cereus).